Consider the following 294-residue polypeptide: MLRGSIVALITPMNEYGHVCETSLEKLINYHINNGTKAIVSVGTTGESSTLSQEEHINVVMLTLEITNKRLPIIAGTGANATSEAILLTKKFENTGISACLTVTPYYNRPTQKGLYQHFKAISENTKIPQILYNVPIRTGCDLIPETIIKLSKFKNIIGIKEATGDLSRVQKIKNSVHKNFFIISGDDTTFLDFIQLGGHGVISVTANIAAKIMSNICHLALNKNFKLARFMNNKLIPLHQGLFHEPNPIPIKWLAKKIGLIASDTLRLPMTPVSNKTRLILEKALYFSKITAK.

Threonine 45 is a pyruvate binding site. Tyrosine 133 serves as the catalytic Proton donor/acceptor. Lysine 161 acts as the Schiff-base intermediate with substrate in catalysis. Isoleucine 203 contacts pyruvate.

This sequence belongs to the DapA family. As to quaternary structure, homotetramer; dimer of dimers.

The protein localises to the cytoplasm. It catalyses the reaction L-aspartate 4-semialdehyde + pyruvate = (2S,4S)-4-hydroxy-2,3,4,5-tetrahydrodipicolinate + H2O + H(+). Its pathway is amino-acid biosynthesis; L-lysine biosynthesis via DAP pathway; (S)-tetrahydrodipicolinate from L-aspartate: step 3/4. Catalyzes the condensation of (S)-aspartate-beta-semialdehyde [(S)-ASA] and pyruvate to 4-hydroxy-tetrahydrodipicolinate (HTPA). The protein is 4-hydroxy-tetrahydrodipicolinate synthase of Buchnera aphidicola subsp. Baizongia pistaciae (strain Bp).